A 547-amino-acid polypeptide reads, in one-letter code: Cytochrome P450 monooxygenase oblB (547 aa).

Helical transmembrane passes span 42–62 (GAVG…RLFL) and 242–262 (FDMF…PWLI). The N-linked (GlcNAc...) asparagine glycan is linked to Asn-277. Residues 345-365 (VLIGSGTMTTAGTMGFLCYYI) form a helical membrane-spanning segment. Cys-489 contributes to the heme binding site.

It belongs to the cytochrome P450 family. Heme serves as cofactor.

It is found in the membrane. The catalysed reaction is ophiobolin F + 4 reduced [NADPH--hemoprotein reductase] + 4 O2 = ophiobolin C + 4 oxidized [NADPH--hemoprotein reductase] + 6 H2O + 4 H(+). It functions in the pathway secondary metabolite biosynthesis; terpenoid biosynthesis. Functionally, cytochrome P450 monooxygenase; part of the gene cluster that mediates the biosynthesis of the sesterterpenes ophiobolins, fungal phytotoxins with potential anti-cancer activities. The first step of the pathway is performed by the sesterterpene synthase oblA that possesses both prenyl transferase and terpene cyclase activity, converting isopentenyl diphosphate and dimethylallyl diphosphate into geranylfarnesyl diphosphate (GFPP) and further converting GFPP into ophiobolin F, respectively. Other sesterterpenoids (C(25) terpenoids) are found as minor products of oblA. The cytochrome P450 monooxygenase oblB then catalyzes a four-step oxidative transformation of ophiobolin F to yield ophiobolin C. The function of the cytochrome P450 monooxygenase oblE has still to be determined. This Emericella variicolor (Aspergillus stellatus) protein is Cytochrome P450 monooxygenase oblB.